The following is a 112-amino-acid chain: uncharacterized protein (112 aa).

The protein to Buchnera BUsg564.

This is an uncharacterized protein from Buchnera aphidicola subsp. Acyrthosiphon pisum (strain APS) (Acyrthosiphon pisum symbiotic bacterium).